A 471-amino-acid polypeptide reads, in one-letter code: Casein kinase 1-like protein 9 (471 aa).

The Protein kinase domain maps to 9-278 (FKLGRKIGSG…LKRLFRDLFI (270 aa)). ATP is bound by residues 15-23 (IGSGSFGEL) and Lys-38. The active-site Proton acceptor is Asp-128. A disordered region spans residues 300–471 (SSSGSSSRTR…RSLELLTLRK (172 aa)). The span at 325–339 (EKQERIAGKETRENR) shows a compositional bias: basic and acidic residues. A compositionally biased stretch (low complexity) spans 385–430 (SSRYGSSSRRAIPSSSRPSSAGGPSDSRSSSRLVTSTGGVGTVSNR). A compositionally biased stretch (polar residues) spans 431-449 (ASTSQRIQAGNESRTSSFS). Over residues 454–464 (NTREDPLRRSL) the composition is skewed to basic and acidic residues.

It belongs to the protein kinase superfamily. CK1 Ser/Thr protein kinase family. Casein kinase I subfamily. As to quaternary structure, monomer. In terms of processing, autophosphorylated on serine, threonine and tyrosine residues. Expressed in leaves, stems and flowers.

It localises to the cytoplasm. The protein resides in the nucleus. It catalyses the reaction L-seryl-[protein] + ATP = O-phospho-L-seryl-[protein] + ADP + H(+). The catalysed reaction is L-threonyl-[protein] + ATP = O-phospho-L-threonyl-[protein] + ADP + H(+). Functionally, casein kinases are operationally defined by their preferential utilization of acidic proteins such as caseins as substrates. Can phosphorylate casein on serine and threonine residues, and poly(Glu,Tyr) in vitro. The protein is Casein kinase 1-like protein 9 of Arabidopsis thaliana (Mouse-ear cress).